The chain runs to 340 residues: Nicotinate-nucleotide--dimethylbenzimidazole phosphoribosyltransferase (340 aa).

The active-site Proton acceptor is the Glu-305.

It belongs to the CobT family.

The enzyme catalyses 5,6-dimethylbenzimidazole + nicotinate beta-D-ribonucleotide = alpha-ribazole 5'-phosphate + nicotinate + H(+). It participates in nucleoside biosynthesis; alpha-ribazole biosynthesis; alpha-ribazole from 5,6-dimethylbenzimidazole: step 1/2. Functionally, catalyzes the synthesis of alpha-ribazole-5'-phosphate from nicotinate mononucleotide (NAMN) and 5,6-dimethylbenzimidazole (DMB). The protein is Nicotinate-nucleotide--dimethylbenzimidazole phosphoribosyltransferase of Allorhizobium ampelinum (strain ATCC BAA-846 / DSM 112012 / S4) (Agrobacterium vitis (strain S4)).